We begin with the raw amino-acid sequence, 319 residues long: Cytochrome c biogenesis protein CcsA (319 aa).

The next 7 helical transmembrane spans lie at 9–29 (ILTH…LITL), 44–64 (GVIG…AYSG), 71–91 (LYES…FPYL), 143–163 (MVLG…LLVI), 225–245 (IISL…VWAN), 259–273 (TWAF…IYLH), and 286–306 (AIVA…VNLL).

It belongs to the CcmF/CycK/Ccl1/NrfE/CcsA family. In terms of assembly, may interact with Ccs1.

Its subcellular location is the plastid. The protein resides in the chloroplast thylakoid membrane. Functionally, required during biogenesis of c-type cytochromes (cytochrome c6 and cytochrome f) at the step of heme attachment. In Oenothera parviflora (Small-flowered evening primrose), this protein is Cytochrome c biogenesis protein CcsA.